A 1052-amino-acid chain; its full sequence is Multidrug resistance protein MdtB (1052 aa).

11 consecutive transmembrane segments (helical) span residues 15–37 (LFILRPVATTLFMIAILLAGIIG), 345–362 (FELLLAIALVVMVIYLFL), 367–389 (ATIIPSIAVPLSLVGTFAAMYFL), 396–418 (LTLMALTIATGFVVDDAIVVIEN), 438–460 (GEIGFTIISLTFSLIAVLIPLLF), 472–494 (FAVTLAVAILISAVVSLTLTPMM), 535–557 (HPWLTLSVAFSTLVLTVILYLLI), 867–889 (LWLIIAAIVAMYIVLGVLYESFI), 909–931 (LMLTGNELDVIAIIGIILLIGIV), 968–990 (ILMTTLAALFGALPLMLSTGVGA), and 1000–1022 (MVGGLIVSQVLTLFTTPVIYLLF). Positions 1032-1052 (KNRHRDEDIDSSELLNGQEPQ) are disordered.

Belongs to the resistance-nodulation-cell division (RND) (TC 2.A.6) family. MdtB subfamily. As to quaternary structure, part of a tripartite efflux system composed of MdtA, MdtB and MdtC. MdtB forms a heteromultimer with MdtC.

It localises to the cell inner membrane. The sequence is that of Multidrug resistance protein MdtB from Yersinia pestis.